The sequence spans 514 residues: Maturase K (514 aa).

It belongs to the intron maturase 2 family. MatK subfamily.

The protein resides in the plastid. It is found in the chloroplast. Its function is as follows. Usually encoded in the trnK tRNA gene intron. Probably assists in splicing its own and other chloroplast group II introns. This is Maturase K from Erythronium grandiflorum (Yellow avalanche-lily).